The primary structure comprises 426 residues: COMPASS component SWD1 (426 aa).

WD repeat units lie at residues 24-63 (ENPL…PICV), 70-109 (AHVR…KPLK), 212-251 (ITSS…ENSA), 264-307 (INKL…LVRV), and 310-350 (GAEE…KWSA). Arg-236 and Lys-266 together coordinate DNA.

As to quaternary structure, component of the Set1C/COMPASS complex which consists of SET1(2), BRE2(2), SPP1(2), SDC1(1), SHG1(1), SWD1(1), SWD2(1), and SWD3(1).

The protein resides in the nucleus. Its subcellular location is the chromosome. It is found in the telomere. Component of the Set1C/COMPASS complex that specifically mono-, di- and trimethylates histone H3 to form H3K4me1/2/3, which subsequently plays a role in telomere length maintenance and transcription elongation regulation. COMPASS recognizes ubiquitinated H2B on one face of the nucleosome which stimulates the methylation of H3 on the opposing face. SWD1/CPS50 acts as an assembly and regulatory hub for COMPASS complex formation. Serves as a highly utilized surface for COMPASS interaction with the nucleosome. This is COMPASS component SWD1 from Saccharomyces cerevisiae (strain ATCC 204508 / S288c) (Baker's yeast).